The following is a 228-amino-acid chain: Ran-binding protein 1 homolog a (228 aa).

Positions 1 to 13 (MATNEPEHEHRDE) are enriched in basic and acidic residues. 2 disordered regions span residues 1-30 (MATN…QVAP) and 159-228 (SEEE…GPST). Acidic residues predominate over residues 14–24 (EEAGANEDEDT). The 136-residue stretch at 27-162 (QVAPIVRLEE…FKEVAESEEE (136 aa)) folds into the RanBD1 domain. Positions 179 to 228 (LTVEETKTEEKTEAKAVETAKTEVKAEEKKESEAEKSGEAKKTEESGPST) are enriched in basic and acidic residues.

As to quaternary structure, interacts with the GTP-bound form of RAN1, RAN2 and RAN3. In terms of tissue distribution, ubiquitous. Preferentially expressed in root tips and gynoecium.

Its subcellular location is the nucleus. The protein resides in the nuclear pore complex. The chain is Ran-binding protein 1 homolog a (RANBP1A) from Arabidopsis thaliana (Mouse-ear cress).